The primary structure comprises 565 residues: Cytokinin dehydrogenase 2 (565 aa).

The first 20 residues, 1 to 20 (MKQEQVRMAVLLMLNCFVKA), serve as a signal peptide directing secretion. The N-linked (GlcNAc...) asparagine glycan is linked to Asn64. In terms of domain architecture, FAD-binding PCMH-type spans 74–255 (RLAAAAAVLY…TRARIPLAPA (182 aa)). Positions 108, 110, and 112 each coordinate FAD. His113 bears the Pros-8alpha-FAD histidine mark. Residues Ser114, Gln118, Asp179, Thr184, Ser190, Ile194, and Ile245 each coordinate FAD. Asn464 is a glycosylation site (N-linked (GlcNAc...) asparagine). Residues Tyr517, Ser554, and Gln557 each contribute to the FAD site.

It belongs to the oxygen-dependent FAD-linked oxidoreductase family. As to quaternary structure, monomer. The cofactor is FAD. Post-translationally, glycosylated. As to expression, mostly expressed in leaves, culms, inflorescence meristems, and flowers, especially in vascular tissues.

Its subcellular location is the secreted. The protein resides in the extracellular space. The enzyme catalyses N(6)-dimethylallyladenine + A + H2O = 3-methyl-2-butenal + adenine + AH2. Catalyzes the oxidation of cytokinins, a family of N(6)-substituted adenine derivatives that are plant hormones, where the substituent is an isopentenyl group. Is a major QTL involved in grain yield. Modulates the number of reproductive organs by regulating the cytokinin accumulation in inflorescence meristems. Acts as negative regulator of panicle branching. In Oryza sativa subsp. japonica (Rice), this protein is Cytokinin dehydrogenase 2.